We begin with the raw amino-acid sequence, 88 residues long: Small ribosomal subunit protein bS16 (88 aa).

Belongs to the bacterial ribosomal protein bS16 family.

This is Small ribosomal subunit protein bS16 from Geobacter sulfurreducens (strain ATCC 51573 / DSM 12127 / PCA).